Reading from the N-terminus, the 332-residue chain is GLIPR1-like protein 2 (332 aa).

Positions 57–191 constitute an SCP domain; sequence LHNELRGTVF…THAALFICNY (135 aa). An N-linked (GlcNAc...) asparagine glycan is attached at Asn-145. A helical transmembrane segment spans residues 253–273; that stretch reads IFILFLRVASLLLCVIVVLIV. The interval 293–332 is disordered; the sequence is EGKTEVEIVMEEGEGEGEGGEGEGEGEEKEEEEMLEEDEQ. Over residues 300–332 the composition is skewed to acidic residues; that stretch reads IVMEEGEGEGEGGEGEGEGEEKEEEEMLEEDEQ.

The protein belongs to the CRISP family.

The protein resides in the membrane. The chain is GLIPR1-like protein 2 (Glipr1l2) from Mus musculus (Mouse).